The chain runs to 360 residues: Phosphoserine aminotransferase (360 aa).

Arg41 contacts L-glutamate. Pyridoxal 5'-phosphate contacts are provided by Trp101, Thr152, Asp172, and Gln195. Lys196 is modified (N6-(pyridoxal phosphate)lysine). 237 to 238 contacts pyridoxal 5'-phosphate; sequence NT.

Belongs to the class-V pyridoxal-phosphate-dependent aminotransferase family. SerC subfamily. As to quaternary structure, homodimer. Pyridoxal 5'-phosphate is required as a cofactor.

It localises to the cytoplasm. The catalysed reaction is O-phospho-L-serine + 2-oxoglutarate = 3-phosphooxypyruvate + L-glutamate. It catalyses the reaction 4-(phosphooxy)-L-threonine + 2-oxoglutarate = (R)-3-hydroxy-2-oxo-4-phosphooxybutanoate + L-glutamate. Its pathway is amino-acid biosynthesis; L-serine biosynthesis; L-serine from 3-phospho-D-glycerate: step 2/3. It functions in the pathway cofactor biosynthesis; pyridoxine 5'-phosphate biosynthesis; pyridoxine 5'-phosphate from D-erythrose 4-phosphate: step 3/5. Its function is as follows. Catalyzes the reversible conversion of 3-phosphohydroxypyruvate to phosphoserine and of 3-hydroxy-2-oxo-4-phosphonooxybutanoate to phosphohydroxythreonine. The sequence is that of Phosphoserine aminotransferase from Burkholderia lata (strain ATCC 17760 / DSM 23089 / LMG 22485 / NCIMB 9086 / R18194 / 383).